The primary structure comprises 327 residues: Thiamine thiazole synthase (327 aa).

Residues C86, E107 to A108, G115, and V182 each bind substrate. C216 carries the 2,3-didehydroalanine (Cys) modification. Residues D218, H233, M285, and R295–G297 each bind substrate.

Belongs to the THI4 family. As to quaternary structure, homooctamer. It depends on Fe cation as a cofactor. In terms of processing, during the catalytic reaction, a sulfide is transferred from Cys-216 to a reaction intermediate, generating a dehydroalanine residue.

Its subcellular location is the cytoplasm. It is found in the nucleus. It carries out the reaction [ADP-thiazole synthase]-L-cysteine + glycine + NAD(+) = [ADP-thiazole synthase]-dehydroalanine + ADP-5-ethyl-4-methylthiazole-2-carboxylate + nicotinamide + 3 H2O + 2 H(+). Involved in biosynthesis of the thiamine precursor thiazole. Catalyzes the conversion of NAD and glycine to adenosine diphosphate 5-(2-hydroxyethyl)-4-methylthiazole-2-carboxylic acid (ADT), an adenylated thiazole intermediate. The reaction includes an iron-dependent sulfide transfer from a conserved cysteine residue of the protein to a thiazole intermediate. The enzyme can only undergo a single turnover, which suggests it is a suicide enzyme. May have additional roles in adaptation to various stress conditions and in DNA damage tolerance. The chain is Thiamine thiazole synthase from Aspergillus oryzae (strain ATCC 42149 / RIB 40) (Yellow koji mold).